The chain runs to 407 residues: 1-deoxy-D-xylulose 5-phosphate reductoisomerase (407 aa).

The NADPH site is built by Thr25, Gly26, Ser27, Ile28, Asn53, and Asn136. Lys137 is a binding site for 1-deoxy-D-xylulose 5-phosphate. An NADPH-binding site is contributed by Glu138. Asp162 serves as a coordination point for Mn(2+). The 1-deoxy-D-xylulose 5-phosphate site is built by Ser163, Glu164, Ser188, and His211. Glu164 provides a ligand contact to Mn(2+). Residue Gly217 coordinates NADPH. 1-deoxy-D-xylulose 5-phosphate-binding residues include Ser224, Asn229, Lys230, and Glu233. Glu233 is a binding site for Mn(2+).

It belongs to the DXR family. The cofactor is Mg(2+). It depends on Mn(2+) as a cofactor.

It carries out the reaction 2-C-methyl-D-erythritol 4-phosphate + NADP(+) = 1-deoxy-D-xylulose 5-phosphate + NADPH + H(+). Its pathway is isoprenoid biosynthesis; isopentenyl diphosphate biosynthesis via DXP pathway; isopentenyl diphosphate from 1-deoxy-D-xylulose 5-phosphate: step 1/6. Functionally, catalyzes the NADPH-dependent rearrangement and reduction of 1-deoxy-D-xylulose-5-phosphate (DXP) to 2-C-methyl-D-erythritol 4-phosphate (MEP). This Rhodopseudomonas palustris (strain BisB18) protein is 1-deoxy-D-xylulose 5-phosphate reductoisomerase.